The primary structure comprises 305 residues: Methionyl-tRNA formyltransferase (305 aa).

Residue 111-114 coordinates (6S)-5,6,7,8-tetrahydrofolate; it reads SLLP.

The protein belongs to the Fmt family.

It catalyses the reaction L-methionyl-tRNA(fMet) + (6R)-10-formyltetrahydrofolate = N-formyl-L-methionyl-tRNA(fMet) + (6S)-5,6,7,8-tetrahydrofolate + H(+). Its function is as follows. Attaches a formyl group to the free amino group of methionyl-tRNA(fMet). The formyl group appears to play a dual role in the initiator identity of N-formylmethionyl-tRNA by promoting its recognition by IF2 and preventing the misappropriation of this tRNA by the elongation apparatus. The sequence is that of Methionyl-tRNA formyltransferase from Helicobacter pylori (strain HPAG1).